A 107-amino-acid polypeptide reads, in one-letter code: UPF0145 protein Ent638_1382 (107 aa).

This sequence belongs to the UPF0145 family.

In Enterobacter sp. (strain 638), this protein is UPF0145 protein Ent638_1382.